A 195-amino-acid chain; its full sequence is HTH-type transcriptional regulator BetI (195 aa).

The HTH tetR-type domain occupies 8–68; sequence SIRRRQLIDA…ATMRDITSQL (61 aa). The H-T-H motif DNA-binding region spans 31–50; it reads TIAQIARRAGVSTGIISHYF.

The protein operates within amine and polyamine biosynthesis; betaine biosynthesis via choline pathway [regulation]. Its function is as follows. Repressor involved in the biosynthesis of the osmoprotectant glycine betaine. It represses transcription of the choline transporter BetT and the genes of BetAB involved in the synthesis of glycine betaine. The polypeptide is HTH-type transcriptional regulator BetI (Escherichia coli O127:H6 (strain E2348/69 / EPEC)).